We begin with the raw amino-acid sequence, 252 residues long: Hydroxyacylglutathione hydrolase (252 aa).

Zn(2+) contacts are provided by histidine 52, histidine 54, aspartate 56, histidine 57, histidine 107, aspartate 128, and histidine 166.

Belongs to the metallo-beta-lactamase superfamily. Glyoxalase II family. In terms of assembly, monomer. It depends on Zn(2+) as a cofactor.

The enzyme catalyses an S-(2-hydroxyacyl)glutathione + H2O = a 2-hydroxy carboxylate + glutathione + H(+). It participates in secondary metabolite metabolism; methylglyoxal degradation; (R)-lactate from methylglyoxal: step 2/2. In terms of biological role, thiolesterase that catalyzes the hydrolysis of S-D-lactoyl-glutathione to form glutathione and D-lactic acid. The chain is Hydroxyacylglutathione hydrolase from Neisseria meningitidis serogroup C / serotype 2a (strain ATCC 700532 / DSM 15464 / FAM18).